Here is a 238-residue protein sequence, read N- to C-terminus: Type III pantothenate kinase (238 aa).

7-14 contacts ATP; it reads DAGNSGLK. Residues Y88 and 95–98 each bind substrate; that span reads GVDR. Residue D97 is the Proton acceptor of the active site. Residue D117 participates in K(+) binding. T120 is a binding site for ATP. T172 contacts substrate.

This sequence belongs to the type III pantothenate kinase family. In terms of assembly, homodimer. It depends on NH4(+) as a cofactor. The cofactor is K(+).

The protein resides in the cytoplasm. The catalysed reaction is (R)-pantothenate + ATP = (R)-4'-phosphopantothenate + ADP + H(+). It participates in cofactor biosynthesis; coenzyme A biosynthesis; CoA from (R)-pantothenate: step 1/5. In terms of biological role, catalyzes the phosphorylation of pantothenate (Pan), the first step in CoA biosynthesis. The protein is Type III pantothenate kinase of Hahella chejuensis (strain KCTC 2396).